A 510-amino-acid chain; its full sequence is NAD(P)H-quinone oxidoreductase subunit 2 B, chloroplastic (510 aa).

The next 13 membrane-spanning stretches (helical) occupy residues Leu24–Leu44, Ile57–Phe77, Ile99–Ile119, Met124–Cys144, Leu149–Tyr169, Tyr183–Gly203, Pro227–Ala247, Trp295–Ile315, Met323–Asp343, Tyr354–Leu374, Ala395–Phe415, Leu418–Leu438, and Met484–Ile504.

The protein belongs to the complex I subunit 2 family. NDH is composed of at least 16 different subunits, 5 of which are encoded in the nucleus.

It localises to the plastid. Its subcellular location is the chloroplast thylakoid membrane. The enzyme catalyses a plastoquinone + NADH + (n+1) H(+)(in) = a plastoquinol + NAD(+) + n H(+)(out). The catalysed reaction is a plastoquinone + NADPH + (n+1) H(+)(in) = a plastoquinol + NADP(+) + n H(+)(out). Functionally, NDH shuttles electrons from NAD(P)H:plastoquinone, via FMN and iron-sulfur (Fe-S) centers, to quinones in the photosynthetic chain and possibly in a chloroplast respiratory chain. The immediate electron acceptor for the enzyme in this species is believed to be plastoquinone. Couples the redox reaction to proton translocation, and thus conserves the redox energy in a proton gradient. The protein is NAD(P)H-quinone oxidoreductase subunit 2 B, chloroplastic of Gossypium hirsutum (Upland cotton).